A 601-amino-acid chain; its full sequence is Elongation factor 4 (601 aa).

Residues 7-189 (SNVRNFSIVA…AIVTRLPPPK (183 aa)) enclose the tr-type G domain. Residues 19 to 24 (DHGKST) and 136 to 139 (NKVD) each bind GTP.

The protein belongs to the TRAFAC class translation factor GTPase superfamily. Classic translation factor GTPase family. LepA subfamily.

It is found in the cell inner membrane. The catalysed reaction is GTP + H2O = GDP + phosphate + H(+). Its function is as follows. Required for accurate and efficient protein synthesis under certain stress conditions. May act as a fidelity factor of the translation reaction, by catalyzing a one-codon backward translocation of tRNAs on improperly translocated ribosomes. Back-translocation proceeds from a post-translocation (POST) complex to a pre-translocation (PRE) complex, thus giving elongation factor G a second chance to translocate the tRNAs correctly. Binds to ribosomes in a GTP-dependent manner. In Afipia carboxidovorans (strain ATCC 49405 / DSM 1227 / KCTC 32145 / OM5) (Oligotropha carboxidovorans), this protein is Elongation factor 4.